The following is an 894-amino-acid chain: Bifunctional glutamine synthetase adenylyltransferase/adenylyl-removing enzyme (894 aa).

Positions 1–410 (MPANTSAAIA…HFEQVFILPS (410 aa)) are adenylyl removase. The interval 415 to 894 (SHPLSELWLD…QVFEQALDFS (480 aa)) is adenylyl transferase.

Belongs to the GlnE family. Mg(2+) serves as cofactor.

It carries out the reaction [glutamine synthetase]-O(4)-(5'-adenylyl)-L-tyrosine + phosphate = [glutamine synthetase]-L-tyrosine + ADP. It catalyses the reaction [glutamine synthetase]-L-tyrosine + ATP = [glutamine synthetase]-O(4)-(5'-adenylyl)-L-tyrosine + diphosphate. Involved in the regulation of glutamine synthetase GlnA, a key enzyme in the process to assimilate ammonia. When cellular nitrogen levels are high, the C-terminal adenylyl transferase (AT) inactivates GlnA by covalent transfer of an adenylyl group from ATP to specific tyrosine residue of GlnA, thus reducing its activity. Conversely, when nitrogen levels are low, the N-terminal adenylyl removase (AR) activates GlnA by removing the adenylyl group by phosphorolysis, increasing its activity. The regulatory region of GlnE binds the signal transduction protein PII (GlnB) which indicates the nitrogen status of the cell. The polypeptide is Bifunctional glutamine synthetase adenylyltransferase/adenylyl-removing enzyme (Chromobacterium violaceum (strain ATCC 12472 / DSM 30191 / JCM 1249 / CCUG 213 / NBRC 12614 / NCIMB 9131 / NCTC 9757 / MK)).